Reading from the N-terminus, the 308-residue chain is Ribosomal RNA large subunit methyltransferase F (308 aa).

This sequence belongs to the methyltransferase superfamily. METTL16/RlmF family.

It is found in the cytoplasm. The enzyme catalyses adenosine(1618) in 23S rRNA + S-adenosyl-L-methionine = N(6)-methyladenosine(1618) in 23S rRNA + S-adenosyl-L-homocysteine + H(+). In terms of biological role, specifically methylates the adenine in position 1618 of 23S rRNA. This Escherichia coli O127:H6 (strain E2348/69 / EPEC) protein is Ribosomal RNA large subunit methyltransferase F.